A 71-amino-acid chain; its full sequence is Exodeoxyribonuclease 7 small subunit (71 aa).

The protein belongs to the XseB family. As to quaternary structure, heterooligomer composed of large and small subunits.

The protein resides in the cytoplasm. It catalyses the reaction Exonucleolytic cleavage in either 5'- to 3'- or 3'- to 5'-direction to yield nucleoside 5'-phosphates.. Its function is as follows. Bidirectionally degrades single-stranded DNA into large acid-insoluble oligonucleotides, which are then degraded further into small acid-soluble oligonucleotides. This is Exodeoxyribonuclease 7 small subunit from Streptococcus equi subsp. zooepidemicus (strain H70).